A 145-amino-acid chain; its full sequence is UPF0735 ACT domain-containing protein CLL_A2896 (145 aa).

The region spanning 69 to 144 (TFNLIVKDQT…YVEKIEFVAM (76 aa)) is the ACT domain.

It belongs to the UPF0735 family.

In Clostridium botulinum (strain Eklund 17B / Type B), this protein is UPF0735 ACT domain-containing protein CLL_A2896.